Reading from the N-terminus, the 179-residue chain is Large ribosomal subunit protein uL5 (179 aa).

It belongs to the universal ribosomal protein uL5 family. As to quaternary structure, part of the 50S ribosomal subunit; part of the 5S rRNA/L5/L18/L25 subcomplex. Contacts the 5S rRNA and the P site tRNA. Forms a bridge to the 30S subunit in the 70S ribosome.

This is one of the proteins that bind and probably mediate the attachment of the 5S RNA into the large ribosomal subunit, where it forms part of the central protuberance. In the 70S ribosome it contacts protein S13 of the 30S subunit (bridge B1b), connecting the 2 subunits; this bridge is implicated in subunit movement. Contacts the P site tRNA; the 5S rRNA and some of its associated proteins might help stabilize positioning of ribosome-bound tRNAs. The protein is Large ribosomal subunit protein uL5 of Geobacter sulfurreducens (strain ATCC 51573 / DSM 12127 / PCA).